A 128-amino-acid polypeptide reads, in one-letter code: Fluoride-specific ion channel FluC (128 aa).

4 consecutive transmembrane segments (helical) span residues 5–25 (IVAIFVGAGLGALLRWFLSLA), 35–55 (LGTLAANLIGGYVIGIAAVVF), 67–87 (LFVITGFLGGLTTFSTYSVEV), and 96–116 (FGWAFAVAALHLTGSFALTAL). Residues glycine 75 and threonine 78 each contribute to the Na(+) site.

It belongs to the fluoride channel Fluc/FEX (TC 1.A.43) family.

Its subcellular location is the cell inner membrane. It catalyses the reaction fluoride(in) = fluoride(out). Na(+) is not transported, but it plays an essential structural role and its presence is essential for fluoride channel function. Its function is as follows. Fluoride-specific ion channel. Important for reducing fluoride concentration in the cell, thus reducing its toxicity. This is Fluoride-specific ion channel FluC from Burkholderia lata (strain ATCC 17760 / DSM 23089 / LMG 22485 / NCIMB 9086 / R18194 / 383).